The following is a 293-amino-acid chain: Phosphatidylserine decarboxylase proenzyme (293 aa).

Active-site charge relay system; for autoendoproteolytic cleavage activity residues include Asp-90, His-147, and Ser-254. Catalysis depends on Ser-254, which acts as the Schiff-base intermediate with substrate; via pyruvic acid; for decarboxylase activity. Pyruvic acid (Ser); by autocatalysis is present on Ser-254.

It belongs to the phosphatidylserine decarboxylase family. PSD-B subfamily. Prokaryotic type I sub-subfamily. Heterodimer of a large membrane-associated beta subunit and a small pyruvoyl-containing alpha subunit. Requires pyruvate as cofactor. Post-translationally, is synthesized initially as an inactive proenzyme. Formation of the active enzyme involves a self-maturation process in which the active site pyruvoyl group is generated from an internal serine residue via an autocatalytic post-translational modification. Two non-identical subunits are generated from the proenzyme in this reaction, and the pyruvate is formed at the N-terminus of the alpha chain, which is derived from the carboxyl end of the proenzyme. The autoendoproteolytic cleavage occurs by a canonical serine protease mechanism, in which the side chain hydroxyl group of the serine supplies its oxygen atom to form the C-terminus of the beta chain, while the remainder of the serine residue undergoes an oxidative deamination to produce ammonia and the pyruvoyl prosthetic group on the alpha chain. During this reaction, the Ser that is part of the protease active site of the proenzyme becomes the pyruvoyl prosthetic group, which constitutes an essential element of the active site of the mature decarboxylase.

It localises to the cell membrane. The catalysed reaction is a 1,2-diacyl-sn-glycero-3-phospho-L-serine + H(+) = a 1,2-diacyl-sn-glycero-3-phosphoethanolamine + CO2. It participates in phospholipid metabolism; phosphatidylethanolamine biosynthesis; phosphatidylethanolamine from CDP-diacylglycerol: step 2/2. Its function is as follows. Catalyzes the formation of phosphatidylethanolamine (PtdEtn) from phosphatidylserine (PtdSer). This Yersinia enterocolitica serotype O:8 / biotype 1B (strain NCTC 13174 / 8081) protein is Phosphatidylserine decarboxylase proenzyme.